We begin with the raw amino-acid sequence, 364 residues long: tRNA 2-selenouridine synthase (364 aa).

The 124-residue stretch at leucine 14 to isoleucine 137 folds into the Rhodanese domain. Cysteine 97 functions as the S-selanylcysteine intermediate in the catalytic mechanism.

The protein belongs to the SelU family. Monomer.

The catalysed reaction is 5-methylaminomethyl-2-thiouridine(34) in tRNA + selenophosphate + (2E)-geranyl diphosphate + H2O + H(+) = 5-methylaminomethyl-2-selenouridine(34) in tRNA + (2E)-thiogeraniol + phosphate + diphosphate. It catalyses the reaction 5-methylaminomethyl-2-thiouridine(34) in tRNA + (2E)-geranyl diphosphate = 5-methylaminomethyl-S-(2E)-geranyl-thiouridine(34) in tRNA + diphosphate. The enzyme catalyses 5-methylaminomethyl-S-(2E)-geranyl-thiouridine(34) in tRNA + selenophosphate + H(+) = 5-methylaminomethyl-2-(Se-phospho)selenouridine(34) in tRNA + (2E)-thiogeraniol. It carries out the reaction 5-methylaminomethyl-2-(Se-phospho)selenouridine(34) in tRNA + H2O = 5-methylaminomethyl-2-selenouridine(34) in tRNA + phosphate. Functionally, involved in the post-transcriptional modification of the uridine at the wobble position (U34) of tRNA(Lys), tRNA(Glu) and tRNA(Gln). Catalyzes the conversion of 2-thiouridine (S2U-RNA) to 2-selenouridine (Se2U-RNA). Acts in a two-step process involving geranylation of 2-thiouridine (S2U) to S-geranyl-2-thiouridine (geS2U) and subsequent selenation of the latter derivative to 2-selenouridine (Se2U) in the tRNA chain. The protein is tRNA 2-selenouridine synthase of Shigella flexneri serotype 5b (strain 8401).